A 264-amino-acid polypeptide reads, in one-letter code: MQMWPPEPSIHFGNFSMEKLYEGKAKILYPTEDPDVLLTIFKDDATAFNAQKKGQIQGKGAINCAISAALFRWLETLGIPTHYIDCPQNDQMLVKAVNIIPLEVVVRNIAAGSLCKQTGLKEGLVLPNPLVEFYFKDDALGDPLLTWERALLLGVTDEARLQTLKDLALNINQHLQRFFAQCDITLVDFKLEFGGDRQGKIILADEISPDTCRLWDNAQADPQARVLDKDRFRRDLGSIEAAYQTVEKRVLSQIERLQSQMGAF.

The protein belongs to the SAICAR synthetase family.

The catalysed reaction is 5-amino-1-(5-phospho-D-ribosyl)imidazole-4-carboxylate + L-aspartate + ATP = (2S)-2-[5-amino-1-(5-phospho-beta-D-ribosyl)imidazole-4-carboxamido]succinate + ADP + phosphate + 2 H(+). It participates in purine metabolism; IMP biosynthesis via de novo pathway; 5-amino-1-(5-phospho-D-ribosyl)imidazole-4-carboxamide from 5-amino-1-(5-phospho-D-ribosyl)imidazole-4-carboxylate: step 1/2. In Synechocystis sp. (strain ATCC 27184 / PCC 6803 / Kazusa), this protein is Phosphoribosylaminoimidazole-succinocarboxamide synthase (purC).